The following is a 301-amino-acid chain: Probable 5-dehydro-4-deoxyglucarate dehydratase (301 aa).

It belongs to the DapA family.

It carries out the reaction 5-dehydro-4-deoxy-D-glucarate + H(+) = 2,5-dioxopentanoate + CO2 + H2O. Its pathway is carbohydrate acid metabolism; D-glucarate degradation; 2,5-dioxopentanoate from D-glucarate: step 2/2. The polypeptide is Probable 5-dehydro-4-deoxyglucarate dehydratase (Cereibacter sphaeroides (strain KD131 / KCTC 12085) (Rhodobacter sphaeroides)).